The chain runs to 436 residues: UPF0597 protein YhaM (436 aa).

It belongs to the UPF0597 family.

This is UPF0597 protein YhaM from Salmonella typhi.